The primary structure comprises 248 residues: 23S rRNA (guanosine-2'-O-)-methyltransferase RlmB (248 aa).

Residues glycine 198, leucine 218, and leucine 227 each coordinate S-adenosyl-L-methionine.

It belongs to the class IV-like SAM-binding methyltransferase superfamily. RNA methyltransferase TrmH family. RlmB subfamily.

The protein localises to the cytoplasm. The enzyme catalyses guanosine(2251) in 23S rRNA + S-adenosyl-L-methionine = 2'-O-methylguanosine(2251) in 23S rRNA + S-adenosyl-L-homocysteine + H(+). Specifically methylates the ribose of guanosine 2251 in 23S rRNA. This is 23S rRNA (guanosine-2'-O-)-methyltransferase RlmB from Pseudomonas aeruginosa (strain ATCC 15692 / DSM 22644 / CIP 104116 / JCM 14847 / LMG 12228 / 1C / PRS 101 / PAO1).